The chain runs to 170 residues: Brassinosteroid-responsive RING protein 1 (170 aa).

The helical transmembrane segment at 15–37 (LFVQTLSILGFIRTIVFSIFRFL) threads the bilayer. The RING-type; atypical zinc finger occupies 94–137 (CAVCLYEFEGEQEIRWLRNCRHIFHRSCLDRWMDHDQKTCPLCR).

This sequence belongs to the RING-type zinc finger family. Highly expressed in stems, rosette leaves and siliques, and moderately expressed in roots, cauline leaves and flower. Detected at low levels in seeds.

Its subcellular location is the membrane. Its function is as follows. May be involved in the brassinosteroids (BRs) signaling pathway and regulate the growth and development of rosette leaves. Seems to prevent over development of leaves and inflorescence stems. This chain is Brassinosteroid-responsive RING protein 1, found in Arabidopsis thaliana (Mouse-ear cress).